Here is a 136-residue protein sequence, read N- to C-terminus: C-type natriuretic peptide prohormone (136 aa).

The first 21 residues, 1 to 21 (MSGQTSFYCGLLLVLLIQAQA), serve as a signal peptide directing secretion. An intrachain disulfide couples C120 to C136.

The protein belongs to the natriuretic peptide family. CNP-115 is differentially processed to produce CNP-38 and CNP-39 in the heart and CNP-22 in the brain.

It localises to the secreted. Hormone which may be vasoactive and natriuretic. Has a cGMP-stimulating activity. The sequence is that of C-type natriuretic peptide prohormone from Triakis scyllium (Banded houndshark).